Reading from the N-terminus, the 460-residue chain is Serine/threonine-protein kinase cds1 (460 aa).

The region spanning 60-116 (WRFGRHKSCEVVLNGPRVSNFHFEIYQGHRNDSDESENVVFLHDHSSNGTFLNFERL) is the FHA domain. The Protein kinase domain occupies 167-433 (YEIIRTLGSG…ESEALQHPWF (267 aa)). ATP contacts are provided by residues 173–181 (LGSGTFAVV) and K196. The active-site Proton acceptor is the D294. The segment covering 438 to 453 (THEHRTPPSSSEHEAT) has biased composition (basic and acidic residues). The segment at 438 to 460 (THEHRTPPSSSEHEATEQLNSSS) is disordered. Residue T443 is modified to Phosphothreonine.

Belongs to the protein kinase superfamily. CAMK Ser/Thr protein kinase family. CHEK2 subfamily. As to quaternary structure, interacts with rad26. In terms of processing, autophosphorylated.

The catalysed reaction is L-seryl-[protein] + ATP = O-phospho-L-seryl-[protein] + ADP + H(+). The enzyme catalyses L-threonyl-[protein] + ATP = O-phospho-L-threonyl-[protein] + ADP + H(+). Has a role in the DNA replication-monitoring S/G2 checkpoint system. It is responsible for blocking mitosis in the S phase. It monitors DNA synthesis by interacting with DNA polymerase alpha and sends a signal to block the onset of mitosis while DNA synthesis is in progress. Phosphorylates rad60 and dna2. The protein is Serine/threonine-protein kinase cds1 (cds1) of Schizosaccharomyces pombe (strain 972 / ATCC 24843) (Fission yeast).